The primary structure comprises 93 residues: Pyrimidine/purine nucleoside phosphorylase (93 aa).

It belongs to the nucleoside phosphorylase PpnP family.

It catalyses the reaction a purine D-ribonucleoside + phosphate = a purine nucleobase + alpha-D-ribose 1-phosphate. It carries out the reaction adenosine + phosphate = alpha-D-ribose 1-phosphate + adenine. The enzyme catalyses cytidine + phosphate = cytosine + alpha-D-ribose 1-phosphate. The catalysed reaction is guanosine + phosphate = alpha-D-ribose 1-phosphate + guanine. It catalyses the reaction inosine + phosphate = alpha-D-ribose 1-phosphate + hypoxanthine. It carries out the reaction thymidine + phosphate = 2-deoxy-alpha-D-ribose 1-phosphate + thymine. The enzyme catalyses uridine + phosphate = alpha-D-ribose 1-phosphate + uracil. The catalysed reaction is xanthosine + phosphate = alpha-D-ribose 1-phosphate + xanthine. Catalyzes the phosphorolysis of diverse nucleosides, yielding D-ribose 1-phosphate and the respective free bases. Can use uridine, adenosine, guanosine, cytidine, thymidine, inosine and xanthosine as substrates. Also catalyzes the reverse reactions. In Shewanella halifaxensis (strain HAW-EB4), this protein is Pyrimidine/purine nucleoside phosphorylase.